The chain runs to 298 residues: Leucine-rich repeat-containing protein 38 (298 aa).

Positions 1-31 (MSLCVAPRHPTGAAAALGLGSLLVLLGPGRA) are cleaved as a signal peptide. 2 cysteine pairs are disulfide-bonded: Cys-32/Cys-38 and Cys-36/Cys-46. Positions 32–60 (CPAGCACTDPHTVDCRDRGLPSVPDPFPL) constitute an LRRNT domain. Residues 32 to 251 (CPAGCACTDP…ECKFSLSLTD (220 aa)) are Extracellular-facing. LRR repeat units lie at residues 61-82 (DVRK…FFIF), 85-106 (DLVY…TFSG), 109-130 (KLAF…AFRS), 133-154 (RLVK…AFES), and 157-177 (SLQV…AALD). Asn-119 carries an N-linked (GlcNAc...) asparagine glycan. Residues 190 to 245 (NPWLCDCDFAHLFSWIQENTSKLPKGLDAIQCSLPMEDRRVALRELSEASFSECKF) form the LRRCT domain. 2 cysteine pairs are disulfide-bonded: Cys-194–Cys-221 and Cys-196–Cys-243. A helical membrane pass occupies residues 252-272 (LFIIIFSGVAVSIAAIISSFF). Residues 273 to 298 (LATVVQCFQRCAPNKDTEDEDDDEDD) are Cytoplasmic-facing.

Interacts with KCNMA1.

The protein resides in the cell membrane. In terms of biological role, auxiliary protein of the large-conductance, voltage and calcium-activated potassium channel (BK alpha). Modulates gating properties by producing a marked shift in the BK channel's voltage dependence of activation in the hyperpolarizing direction, and in the absence of calcium. The chain is Leucine-rich repeat-containing protein 38 (Lrrc38) from Mus musculus (Mouse).